Consider the following 215-residue polypeptide: Large ribosomal subunit protein uL3 (215 aa).

The disordered stretch occupies residues 136 to 155 (GVSISHRSHGSTGQRQDPGK). Glutamine 151 is subject to N5-methylglutamine.

It belongs to the universal ribosomal protein uL3 family. In terms of assembly, part of the 50S ribosomal subunit. Forms a cluster with proteins L14 and L19. Post-translationally, methylated by PrmB.

One of the primary rRNA binding proteins, it binds directly near the 3'-end of the 23S rRNA, where it nucleates assembly of the 50S subunit. This Rickettsia rickettsii (strain Iowa) protein is Large ribosomal subunit protein uL3.